The following is a 491-amino-acid chain: MNDNIKLTEQEIIRREKLKKYESLGIKTFKKFDHEKINIYSNEIVEKYNHFSKDELLEKQIKLIIAGRILTQRGPFIVIQDTNGKIQLYVDKKELEEQKETLALLDIGDIIYVKGTLMKTMKGELTIKVNFFDLLTKGLTPLAEKYHGLVDVEERYRKRYLDLISNPNIKEIFWTRTKVISKIRKFFDEQNFMEVETPMLHSILGGANARPFKTYHNSLSSSFNLRIATELPLKKLLVGGIDRVYEIGRIFRNEGIDTTHNPEFTSIEFYQAYSNLEIMMEQTENLIKFIAKELGLSKIKNHDVEIDLLADFKKINMVDAVSEATKVDFRNIDLDKAIEVAGRYKVKVEKYFKVGHIINELFELLIEKTLIQPTFVTGHPIEISPLAATSEDERFTERAELFINTKEYANMFTELNDPLDQRRRFEAQLEEKESGNEEASEIDESFLSALEYGLPPAGGCGIGIDRLVMLLTEKESIREVILFPTLKKKQV.

2 residues coordinate Mg(2+): Glu-400 and Glu-407.

Belongs to the class-II aminoacyl-tRNA synthetase family. In terms of assembly, homodimer. It depends on Mg(2+) as a cofactor.

The protein localises to the cytoplasm. The enzyme catalyses tRNA(Lys) + L-lysine + ATP = L-lysyl-tRNA(Lys) + AMP + diphosphate. The sequence is that of Lysine--tRNA ligase 1 from Mycoplasmopsis pulmonis (strain UAB CTIP) (Mycoplasma pulmonis).